The chain runs to 121 residues: Small ribosomal subunit protein uS13 (121 aa).

The interval 93 to 121 (RGLPMRGQRTRTNARTRKGPRKAAQSLKK) is disordered.

This sequence belongs to the universal ribosomal protein uS13 family. Part of the 30S ribosomal subunit. Forms a loose heterodimer with protein S19. Forms two bridges to the 50S subunit in the 70S ribosome.

Located at the top of the head of the 30S subunit, it contacts several helices of the 16S rRNA. In the 70S ribosome it contacts the 23S rRNA (bridge B1a) and protein L5 of the 50S subunit (bridge B1b), connecting the 2 subunits; these bridges are implicated in subunit movement. Contacts the tRNAs in the A and P-sites. The chain is Small ribosomal subunit protein uS13 from Albidiferax ferrireducens (strain ATCC BAA-621 / DSM 15236 / T118) (Rhodoferax ferrireducens).